The following is a 134-amino-acid chain: Small ribosomal subunit protein uS8c (134 aa).

Belongs to the universal ribosomal protein uS8 family. In terms of assembly, part of the 30S ribosomal subunit.

It is found in the plastid. It localises to the chloroplast. In terms of biological role, one of the primary rRNA binding proteins, it binds directly to 16S rRNA central domain where it helps coordinate assembly of the platform of the 30S subunit. The chain is Small ribosomal subunit protein uS8c (rps8) from Panax ginseng (Korean ginseng).